We begin with the raw amino-acid sequence, 1018 residues long: MWGQRLFAGTAVAQSVSFPGLVQMDEDTHYNKVEDVVGSHVEDAVTFWAQNVSKNKDIMKIGCSLSEVCPLANSVFGNLDPKKIYGGLFSEDKCWYRCKVLKTISDDKCLVRYIDYGNTEILNRSDIVEIPPELQFSSIAKKYRLWGLQIPSGQEVTQFDQGRTFLGSLIFEKEIKMRIKATYQDGTVIAQAEYGTVDIGEEVAKKGFAEKCRLTSGIDACEAKKPDPNQLALRSLKNPIPLWGRRSNQSTFSRPKGHFNGRLTLDVKYETSAGNHVTFPKESLAAGDFNLGSNVSLAKIKQDQKLIEENEKLKTEKEVLLENYKALELKVEQTAQELQQEKTATMDLTKHLESTLKTCVGTRLKNLAAKVELLKEIRHINISIRFGNDLSDAMQVLDEGSFTTLASLNELEKIWAEYNVAQEKIQTCLNENEGNILIAERNEVQQKLFVAVDVFILEVDDLPLDKRLKTLQDLATSLESVYGKAKEGTNNSEETLRKFYDWQCTKREEFASIRSETEASLQHLVAWFQSSQKVFDLSLDEPLTSEDLIGNIDEILEKTESCVCKELELSLIEQGVIDKEIILSTYSQVLQKIHSEEKFIATLLSKYKDSVEFKKQMIDCLNKNPNVDYLLSIKKTLKGLKAQLRWKLVEKSNLEESDDHDGTEIEKIKQEITQLRNSVFQEIYHEREEYEKLNSLTQKWFPELPLLYPEIGLLKYMNSGGLLTMSLERDLLDTEPMKELSSKRPLVCSEVNGQPVLLKGYSVDVDTEGRVIQRAASYHRACGYAKEESGLLPLIFLFLCKSDPVAYLMVPYYPKANLSAVQASMPLTSEEALKVMKGVARGLHTLHSANIIHGSLHQNNVFALNREQGIVGDYDFTKSESQRASVNAMVGGLSLLSPELKTGKPPSASSDLYAYGCLFLWLSVQNQEFETNEDGIPKVDQFHLDDNVKSLLCSLIYFRSSMTAEQVLNAECFLLPKGKSVPIPEKEIECTQHSREDESKMESLDRYSEKTRNGEANP.

Positions 78–137 (NLDPKKIYGGLFSEDKCWYRCKVLKTISDDKCLVRYIDYGNTEILNRSDIVEIPPELQFS) constitute a Tudor domain. The stretch at 298-358 (AKIKQDQKLI…TKHLESTLKT (61 aa)) forms a coiled coil. The Protein kinase domain occupies 711-1018 (IGLLKYMNSG…EKTRNGEANP (308 aa)). Residues 717–725 (MNSGGLLTM) and lysine 738 contribute to the ATP site. Residues 988-1018 (IECTQHSREDESKMESLDRYSEKTRNGEANP) are disordered.

The protein belongs to the protein kinase superfamily. Ser/Thr protein kinase family. In terms of tissue distribution, testis specific. Expressed only in male germ cells.

The catalysed reaction is L-seryl-[protein] + ATP = O-phospho-L-seryl-[protein] + ADP + H(+). It catalyses the reaction L-threonyl-[protein] + ATP = O-phospho-L-threonyl-[protein] + ADP + H(+). This Mus musculus (Mouse) protein is Serine/threonine-protein kinase 31 (Stk31).